A 430-amino-acid polypeptide reads, in one-letter code: Small ribosomal subunit protein uS5m (430 aa).

One can recognise an S5 DRBM domain in the interval 218 to 282; the sequence is FDTRILEVRN…NRAVHHLHYI (65 aa).

This sequence belongs to the universal ribosomal protein uS5 family. Component of the mitochondrial small ribosomal subunit (mt-SSU). Mature mammalian 55S mitochondrial ribosomes consist of a small (28S) and a large (39S) subunit. The 28S small subunit contains a 12S ribosomal RNA (12S mt-rRNA) and 30 different proteins. The 39S large subunit contains a 16S rRNA (16S mt-rRNA), a copy of mitochondrial valine transfer RNA (mt-tRNA(Val)), which plays an integral structural role, and 52 different proteins.

It is found in the mitochondrion. The protein is Small ribosomal subunit protein uS5m (MRPS5) of Homo sapiens (Human).